The primary structure comprises 366 residues: tRNA-specific 2-thiouridylase MnmA (366 aa).

ATP-binding positions include 6–13 (AMSGGVDS) and Leu32. Residue Cys101 is the Nucleophile of the active site. A disulfide bridge links Cys101 with Cys197. ATP is bound at residue Gly125. The interval 147–149 (KDQ) is interaction with tRNA. The active-site Cysteine persulfide intermediate is Cys197.

Belongs to the MnmA/TRMU family.

The protein resides in the cytoplasm. The catalysed reaction is S-sulfanyl-L-cysteinyl-[protein] + uridine(34) in tRNA + AH2 + ATP = 2-thiouridine(34) in tRNA + L-cysteinyl-[protein] + A + AMP + diphosphate + H(+). Functionally, catalyzes the 2-thiolation of uridine at the wobble position (U34) of tRNA, leading to the formation of s(2)U34. This chain is tRNA-specific 2-thiouridylase MnmA, found in Cutibacterium acnes (strain DSM 16379 / KPA171202) (Propionibacterium acnes).